The primary structure comprises 252 residues: Small ribosomal subunit protein uS3 (252 aa).

One can recognise a KH type-2 domain in the interval 39–111 (IRKLINNFAK…EVNLNVLEVK (73 aa)). Residues 222–252 (KPFASQSSNTPNRRPRNFKGGNNNHVNAKKN) are disordered. The span at 241–252 (GGNNNHVNAKKN) shows a compositional bias: polar residues.

This sequence belongs to the universal ribosomal protein uS3 family. As to quaternary structure, part of the 30S ribosomal subunit. Forms a tight complex with proteins S10 and S14.

In terms of biological role, binds the lower part of the 30S subunit head. Binds mRNA in the 70S ribosome, positioning it for translation. In Phytoplasma sp. (strain STRAWB2), this protein is Small ribosomal subunit protein uS3.